The sequence spans 146 residues: Large ribosomal subunit protein uL15 (146 aa).

Residues 1-13 show a composition bias toward basic and acidic residues; that stretch reads MKLHELKAAEGSR. The interval 1-61 is disordered; sequence MKLHELKAAE…GGQTPLFRRM (61 aa). Gly residues-rich tracts occupy residues 23–35 and 42–52; these read TSSGNGKTSGRGQ and SGGGVRLGFEG.

Belongs to the universal ribosomal protein uL15 family. Part of the 50S ribosomal subunit.

Its function is as follows. Binds to the 23S rRNA. In Streptococcus uberis (strain ATCC BAA-854 / 0140J), this protein is Large ribosomal subunit protein uL15.